The chain runs to 679 residues: Shutoff protein (679 aa).

The interval leucine 178 to serine 232 is binding to host EIF4G. Residues arginine 235–alanine 353 enclose the RRM domain. Tyrosine 252 and tyrosine 564 each carry phosphotyrosine; by host. Residues arginine 552–serine 679 are disordered. The segment covering proline 661–serine 679 has biased composition (basic and acidic residues).

Belongs to the adenoviridae shutoff protein family. As to quaternary structure, monomer. Interacts with hexon protein; this interaction allows chaperoning and trimerization of hexon proteins. Interacts (via N-terminus) with host initiation factor EIF4G (via C-terminus). Interacts (via RRM domain) with viral mRNAs that contain the tripartite leader; this interaction allows ribosome shunting and expression of viral late mRNAs. Post-translationally, might be cleaved by the viral protease. In terms of processing, phosphorylated. Tyrosine phosphorylation enhances preferential binding to tripartite leader mRNAs and allows ribosome shunting. Methylated. Asymmetric dimethylation by host PRMT1 of the Arg/Gly-rich region may regulate shutoff protein binding to hexon and promote the capsid assembly in the nucleus.

The protein resides in the host cytoplasm. Its function is as follows. Protein that inhibits host translation while promoting late viral translation by ribosome shunting. Blocks host cap-dependent translation by binding to eIF4G, displacing MKNK1 from cap initiation complexes and preventing EIF4E phosphorylation. Binds to the tripartite leader sequence of viral late mRNAs and recruits host eIF4G, PABPC1/poly-A binding protein and 40S ribosomes subunits on viral mRNAs, allowing ribosome shunting and efficient translation of late viral mRNAs even though conventional translation via ribosome scanning from the cap has been shut off in the host cell. During assembly, acts as a chaperone protein that helps hexon proteins assembly into trimers. The polypeptide is Shutoff protein (Snake adenovirus serotype 1 (SnAdV-1)).